A 392-amino-acid chain; its full sequence is Chaperone protein DnaJ 1 (392 aa).

Residues 4-67 enclose the J domain; it reads DYYEILGVSH…QKRAVFDRGG (64 aa). The CR-type zinc finger occupies 134 to 216; that stretch reads GVTKSLEVDT…CSGEGRVRTT (83 aa). Positions 147, 150, 164, 167, 190, 193, 204, and 207 each coordinate Zn(2+). CXXCXGXG motif repeat units lie at residues 147–154, 164–171, 190–197, and 204–211; these read CPKCQGKG, CDTCQGRG, CPTCHGYG, and CQECSGEG. The interval 367 to 392 is disordered; it reads ETNASASVEKSGGRGMFSRIKEAFGG.

The protein belongs to the DnaJ family. As to quaternary structure, homodimer. Zn(2+) serves as cofactor.

It is found in the cytoplasm. In terms of biological role, participates actively in the response to hyperosmotic and heat shock by preventing the aggregation of stress-denatured proteins and by disaggregating proteins, also in an autonomous, DnaK-independent fashion. Unfolded proteins bind initially to DnaJ; upon interaction with the DnaJ-bound protein, DnaK hydrolyzes its bound ATP, resulting in the formation of a stable complex. GrpE releases ADP from DnaK; ATP binding to DnaK triggers the release of the substrate protein, thus completing the reaction cycle. Several rounds of ATP-dependent interactions between DnaJ, DnaK and GrpE are required for fully efficient folding. Also involved, together with DnaK and GrpE, in the DNA replication of plasmids through activation of initiation proteins. This is Chaperone protein DnaJ 1 from Cutibacterium acnes (strain DSM 16379 / KPA171202) (Propionibacterium acnes).